The primary structure comprises 376 residues: Succinyl-diaminopimelate desuccinylase 1 (376 aa).

A Zn(2+)-binding site is contributed by H67. D69 is a catalytic residue. D100 is a binding site for Zn(2+). The Proton acceptor role is filled by E134. E135, E163, and H349 together coordinate Zn(2+).

Belongs to the peptidase M20A family. DapE subfamily. In terms of assembly, homodimer. Zn(2+) is required as a cofactor. It depends on Co(2+) as a cofactor.

The catalysed reaction is N-succinyl-(2S,6S)-2,6-diaminopimelate + H2O = (2S,6S)-2,6-diaminopimelate + succinate. It functions in the pathway amino-acid biosynthesis; L-lysine biosynthesis via DAP pathway; LL-2,6-diaminopimelate from (S)-tetrahydrodipicolinate (succinylase route): step 3/3. Its function is as follows. Catalyzes the hydrolysis of N-succinyl-L,L-diaminopimelic acid (SDAP), forming succinate and LL-2,6-diaminopimelate (DAP), an intermediate involved in the bacterial biosynthesis of lysine and meso-diaminopimelic acid, an essential component of bacterial cell walls. This chain is Succinyl-diaminopimelate desuccinylase 1, found in Shewanella loihica (strain ATCC BAA-1088 / PV-4).